The primary structure comprises 254 residues: Phosphomannomutase (254 aa).

D16 functions as the Nucleophile in the catalytic mechanism. Positions 16 and 18 each coordinate Mg(2+). D18 acts as the Proton donor/acceptor in catalysis. Alpha-D-mannose 1-phosphate-binding residues include R25, R129, R140, R147, S185, and D187. The Mg(2+) site is built by D216, Y228, D230, and T233.

Belongs to the eukaryotic PMM family. In terms of assembly, homodimer.

The protein localises to the cytoplasm. It carries out the reaction alpha-D-mannose 1-phosphate = D-mannose 6-phosphate. It participates in nucleotide-sugar biosynthesis; GDP-alpha-D-mannose biosynthesis; alpha-D-mannose 1-phosphate from D-fructose 6-phosphate: step 2/2. Involved in the synthesis of the GDP-mannose and dolichol-phosphate-mannose required for a number of critical mannosyl transfer reactions. Required for maintaining N-linked glycoprotein glycosylation at the neuromuscular junction (NMJ) synaptomatrix, and thus acts in multiple pathways that prevent NMJ structural overgrowth, restrict synaptic bouton differentiation, and limit NMJ neurotransmission strength, in order to maintain viability, coordinate movement, and in adults ensure correct wing positioning. Acts in the NMJ trans-synaptic Wg pathway via glycosylation of synaptic Mmp2 which enables dlp/wg signaling during development. This Drosophila melanogaster (Fruit fly) protein is Phosphomannomutase.